Reading from the N-terminus, the 687-residue chain is Chloride channel protein ClC-Ka (687 aa).

4 helical membrane-spanning segments follow: residues 52-72, 161-181, 202-222, and 236-256; these read FLMTLGVLMALVSYAMNFAIG, LFLGKVGPFVHLSVMIAAYLG, VAAAAVGVATVFAAPFSGVLF, and YWRGFFAATCGAFIFRLLAVF. Residues Glu-259, Glu-261, Asp-278, and Glu-281 each coordinate Ca(2+). Transmembrane regions (helical) follow at residues 282–302, 329–349, 396–416, 417–437, 452–472, and 486–506; these read IFFFVALGGICGVLSCAYLFC, ALATLLLASITYPPGVGHFLA, FTIFGTLAFFLVMKFWMLILA, TTIPMPAGYFMPIFILGAAIG, IVTGGVTNPIMPGGYALAGAA, and LLAFELTGQIVHALPVLMAVL. The Cytoplasmic portion of the chain corresponds to 507–687; that stretch reads AANAIAQSCQ…SNLTNPPAPK (181 aa). CBS domains follow at residues 551–609 and 626–684; these read MNHS…EPPS and CPTE…TNPP.

This sequence belongs to the chloride channel (TC 2.A.49) family. CLCNKA subfamily. In terms of assembly, homodimer. Interacts with BSND.

It localises to the basolateral cell membrane. The catalysed reaction is chloride(in) = chloride(out). It catalyses the reaction bromide(in) = bromide(out). It carries out the reaction nitrate(in) = nitrate(out). The enzyme catalyses iodide(out) = iodide(in). With respect to regulation, activated by extracellular Ca(2+) and inhibited by extracellular acidic pH. Functionally, anion-selective channel permeable to small monovalent anions with ion selectivity for chloride &gt; bromide &gt; nitrate &gt; iodide. Forms a homodimeric channel where each subunit has its own ion conduction pathway. May conduct double-barreled currents controlled by two types of gates, two fast gates that control each subunit independently and a slow common gate that opens and shuts off both subunits simultaneously. Assembles with the regulatory subunit BSND/Barttin for sorting at the basolateral plasma membrane domain and functional switch to the ion conducting state. CLCNKA:BSND channels display mostly a linear current-voltage relationship with fast gating at negative potentials. Mediates transepithelial chloride transport from the lumen to interstitial compartment along the thin ascending limb of Henle's loop, contributing to generation of hypertonic medullary interstitium as a countercurrent system to achieve urine concentration. Conducts chloride currents in the stria vascularis of the inner ear to establish the endocochlear potential necessary for normal hearing. This is Chloride channel protein ClC-Ka from Homo sapiens (Human).